The chain runs to 242 residues: Large ribosomal subunit protein uL3 (242 aa).

Residue Gln-151 is modified to N5-methylglutamine.

Belongs to the universal ribosomal protein uL3 family. In terms of assembly, part of the 50S ribosomal subunit. Forms a cluster with proteins L14 and L19. Methylated by PrmB.

Functionally, one of the primary rRNA binding proteins, it binds directly near the 3'-end of the 23S rRNA, where it nucleates assembly of the 50S subunit. The protein is Large ribosomal subunit protein uL3 of Zymomonas mobilis subsp. mobilis (strain ATCC 31821 / ZM4 / CP4).